A 225-amino-acid chain; its full sequence is Orotate phosphoribosyltransferase (225 aa).

Lysine 29 is a binding site for 5-phospho-alpha-D-ribose 1-diphosphate. 37–38 (FF) contacts orotate. 5-phospho-alpha-D-ribose 1-diphosphate-binding positions include 75–76 (YK), arginine 101, lysine 102, lysine 105, histidine 107, and 126–134 (DDVISAGTS). Orotate is bound by residues serine 130 and arginine 158.

It belongs to the purine/pyrimidine phosphoribosyltransferase family. PyrE subfamily. In terms of assembly, homodimer. It depends on Mg(2+) as a cofactor.

It catalyses the reaction orotidine 5'-phosphate + diphosphate = orotate + 5-phospho-alpha-D-ribose 1-diphosphate. The protein operates within pyrimidine metabolism; UMP biosynthesis via de novo pathway; UMP from orotate: step 1/2. Functionally, catalyzes the transfer of a ribosyl phosphate group from 5-phosphoribose 1-diphosphate to orotate, leading to the formation of orotidine monophosphate (OMP). The protein is Orotate phosphoribosyltransferase of Ralstonia pickettii (strain 12J).